Reading from the N-terminus, the 484-residue chain is MIQVLLVTICLAVFPYQGNSIILESGNVNDYEVVYPRKVTALPKGAVQPKYEDAMQYEFKVNGEPVVLHLEKNKGLFSEDYSETHYSPDGREITTYPSVEDHCYYHGRIQNDADLTASISACNGLKGYFKLQGETYLIEPLKLPDSEAHAVFKYENVEKEDEAPKMCGVTETNWESDEPIKKASQLNLTPDEQRFIELVIVADHRMYTKYDGDETEISSKIYEIANDLNVIFRALYIHVALIGLEIWPSGELCNVTLSADDTLDSFAEWTKRDLQKRKRHDNAQLLTGMIFNEKIEGRAYKKTMCHWKRSVGIVRDHRTRPHFVANRMAHGLGHNLGINHDGDSCTCGANSCIMSATVSNDPSSRFSDCSLNQYSSDIIHNPYTSRCLYNGPWKTDIVSPPVCGNYYVEVGEDCDCGPPANCQNRCCDAATCRLTPGSQCAEGLCCEQCRFSTEGKLCREAKGDWNNDYCSGQSGDCPRNPFRA.

A signal peptide spans 1 to 20; it reads MIQVLLVTICLAVFPYQGNS. A propeptide spanning residues 21 to 192 is cleaved from the precursor; sequence IILESGNVND…ASQLNLTPDE (172 aa). Residue Q193 is modified to Pyrrolidone carboxylic acid. One can recognise a Peptidase M12B domain in the interval 194–392; the sequence is RFIELVIVAD…YTSRCLYNGP (199 aa). E197 contacts Ca(2+). An N-linked (GlcNAc...) asparagine glycan is attached at N254. D281 provides a ligand contact to Ca(2+). Cystine bridges form between C305/C387, C345/C369, and C347/C352. Positions 330, 334, and 340 each coordinate Zn(2+). Ca(2+) contacts are provided by C387, N390, V402, N405, E409, E412, and D415. One can recognise a Disintegrin domain in the interval 400–484; it reads PPVCGNYYVE…GDCPRNPFRA (85 aa). 7 disulfide bridges follow: C403–C422, C414–C432, C416–C427, C426–C449, C440–C446, C445–C470, and C458–C477. The Cell attachment site motif lies at 462-464; that stretch reads KGD.

The protein belongs to the venom metalloproteinase (M12B) family. P-II subfamily. P-IIb sub-subfamily. Zn(2+) is required as a cofactor. The N-terminus is blocked. As to expression, expressed by the venom gland.

It is found in the secreted. Its function is as follows. Snake venom zinc metalloproteinase that inhibits ADP-induced platelet aggregation in human platelet-rich plasma (IC(50) is 175 nM) and cleaves alpha-(FGA) and subsequently the beta-chain (FGG) of bovine fibrinogen, leaving the gamma-chain unaffected. It is also able to inhibit proliferatin of ECV304 cells by inducing apoptosis of these cells. This is Zinc metalloproteinase-disintegrin stejnitin from Trimeresurus stejnegeri (Chinese green tree viper).